We begin with the raw amino-acid sequence, 167 residues long: Ribosome-binding factor A (167 aa).

Residues 127 to 167 form a disordered region; the sequence is SRANAQYAGDADPYKHDEPDDDDFDDDDDVEVEDWDDDDEA. Residues 145-167 show a composition bias toward acidic residues; the sequence is PDDDDFDDDDDVEVEDWDDDDEA.

Belongs to the RbfA family. As to quaternary structure, monomer. Binds 30S ribosomal subunits, but not 50S ribosomal subunits or 70S ribosomes.

Its subcellular location is the cytoplasm. Its function is as follows. One of several proteins that assist in the late maturation steps of the functional core of the 30S ribosomal subunit. Associates with free 30S ribosomal subunits (but not with 30S subunits that are part of 70S ribosomes or polysomes). Required for efficient processing of 16S rRNA. May interact with the 5'-terminal helix region of 16S rRNA. This is Ribosome-binding factor A from Bifidobacterium adolescentis (strain ATCC 15703 / DSM 20083 / NCTC 11814 / E194a).